The sequence spans 122 residues: Large ribosomal subunit protein uL14 (122 aa).

The protein belongs to the universal ribosomal protein uL14 family. Part of the 50S ribosomal subunit. Forms a cluster with proteins L3 and L19. In the 70S ribosome, L14 and L19 interact and together make contacts with the 16S rRNA in bridges B5 and B8.

In terms of biological role, binds to 23S rRNA. Forms part of two intersubunit bridges in the 70S ribosome. The chain is Large ribosomal subunit protein uL14 from Nocardia farcinica (strain IFM 10152).